The sequence spans 360 residues: MSRVYNFSAGPAAIPEEVLFTVRDELLDWHGIGMSIAEVSHRGEEFIGVAEEAERDLRELLAVPESYHILFLQGGSRLQFDMVPMNLLANHKKAVYIDSGVWSNLAIREAKNYCDPHLATNAKELNYTGIPDQATWDMPNEAAYFYYVDNETVNGIEFPFIPDTDLTLVCDMSSNLLSRPFDVSRYGLIFACAQKNMGLAGLTIVIVHDDLLKRSPLPTTPSYLQYALHAKERSFINTPPTFAWYLAGLIFKWVKNQGGVAVLAERNQRKAAKLYKFIDKSNFFDNPINPTYRSRMNVIFRLADERLNSLFLKEATENGLANLKGHRLLGGMRASIYNAMTEEGVDALINFMGQFEKRHG.

Arg42 contacts L-glutamate. Pyridoxal 5'-phosphate-binding residues include Trp102, Thr152, Asp171, and Gln194. Lys195 is subject to N6-(pyridoxal phosphate)lysine. 237–238 (NT) lines the pyridoxal 5'-phosphate pocket.

Belongs to the class-V pyridoxal-phosphate-dependent aminotransferase family. SerC subfamily. In terms of assembly, homodimer. It depends on pyridoxal 5'-phosphate as a cofactor.

The protein resides in the cytoplasm. The catalysed reaction is O-phospho-L-serine + 2-oxoglutarate = 3-phosphooxypyruvate + L-glutamate. The enzyme catalyses 4-(phosphooxy)-L-threonine + 2-oxoglutarate = (R)-3-hydroxy-2-oxo-4-phosphooxybutanoate + L-glutamate. It functions in the pathway amino-acid biosynthesis; L-serine biosynthesis; L-serine from 3-phospho-D-glycerate: step 2/3. It participates in cofactor biosynthesis; pyridoxine 5'-phosphate biosynthesis; pyridoxine 5'-phosphate from D-erythrose 4-phosphate: step 3/5. Catalyzes the reversible conversion of 3-phosphohydroxypyruvate to phosphoserine and of 3-hydroxy-2-oxo-4-phosphonooxybutanoate to phosphohydroxythreonine. The polypeptide is Phosphoserine aminotransferase (Coxiella burnetii (strain RSA 493 / Nine Mile phase I)).